Reading from the N-terminus, the 106-residue chain is MTEEVHKLKITIFTDKGRSTISGGDFPLPVLPYPAPYTFRLFDYEIEGPNLTNKEFKVKTGKIEYKGEEFDIPSSSKGSWRGVDEEMDLIYVTIYPSRQPKKVFHY.

This sequence belongs to the csb family.

This is an uncharacterized protein from Dictyostelium discoideum (Social amoeba).